The chain runs to 431 residues: Gamma-glutamyl phosphate reductase (431 aa).

Belongs to the gamma-glutamyl phosphate reductase family.

Its subcellular location is the cytoplasm. It catalyses the reaction L-glutamate 5-semialdehyde + phosphate + NADP(+) = L-glutamyl 5-phosphate + NADPH + H(+). It functions in the pathway amino-acid biosynthesis; L-proline biosynthesis; L-glutamate 5-semialdehyde from L-glutamate: step 2/2. Functionally, catalyzes the NADPH-dependent reduction of L-glutamate 5-phosphate into L-glutamate 5-semialdehyde and phosphate. The product spontaneously undergoes cyclization to form 1-pyrroline-5-carboxylate. The polypeptide is Gamma-glutamyl phosphate reductase (Methylobacterium sp. (strain 4-46)).